Reading from the N-terminus, the 74-residue chain is Putative membrane protein insertion efficiency factor (74 aa).

This sequence belongs to the UPF0161 family.

The protein resides in the cell inner membrane. Could be involved in insertion of integral membrane proteins into the membrane. The sequence is that of Putative membrane protein insertion efficiency factor from Anaeromyxobacter sp. (strain Fw109-5).